We begin with the raw amino-acid sequence, 484 residues long: GTPase Obg (484 aa).

An Obg domain is found at 7–164; the sequence is PRFVDRVVIH…RDLTLELKTV (158 aa). The segment at 21–43 is disordered; that stretch reads SGGNGCASVHREKFKPLGGPDGG. The OBG-type G domain maps to 165–345; it reads ADVGLVGFPS…LIFGLSQMIS (181 aa). GTP is bound by residues 171–178, 196–200, 217–220, 297–300, and 326–328; these read GFPSAGKS, FTTLV, DVPG, NKID, and STA. Mg(2+)-binding residues include S178 and T198. The OCT domain occupies 363–441; it reads PIPVDDSGFT…IGEMTFDWEP (79 aa). The tract at residues 439-484 is disordered; that stretch reads WEPQTPAGEPVAMSGRGTDPRLDSNKRVGAAERKAARSRRREHGDG. Basic and acidic residues predominate over residues 456–473; it reads TDPRLDSNKRVGAAERKA. Positions 474–484 are enriched in basic residues; it reads ARSRRREHGDG.

It belongs to the TRAFAC class OBG-HflX-like GTPase superfamily. OBG GTPase family. As to quaternary structure, monomer. It depends on Mg(2+) as a cofactor.

Its subcellular location is the cytoplasm. In terms of biological role, an essential GTPase which binds GTP, GDP and possibly (p)ppGpp with moderate affinity, with high nucleotide exchange rates and a fairly low GTP hydrolysis rate. Plays a role in control of the cell cycle, stress response, ribosome biogenesis and in those bacteria that undergo differentiation, in morphogenesis control. This Mycobacterium tuberculosis (strain CDC 1551 / Oshkosh) protein is GTPase Obg.